A 2923-amino-acid polypeptide reads, in one-letter code: Cadherin EGF LAG seven-pass G-type receptor 2 (2923 aa).

Positions 1–31 are cleaved as a signal peptide; it reads MRSPATGVPLPTPPPPLLLLLLLLLPPPLLG. Residues 32–2380 are Extracellular-facing; sequence DQVGPCRSLG…GEILPLKTLT (2349 aa). Positions 154–198 are disordered; sequence PGLRAGERSPEESLGGRRKRNVNTAPQFQPPSYQATVPENQPAGT. Residues 158 to 168 are compositionally biased toward basic and acidic residues; that stretch reads AGERSPEESLG. Positions 175–196 are enriched in polar residues; it reads VNTAPQFQPPSYQATVPENQPA. Cadherin domains follow at residues 182-289, 290-399, 400-505, 506-610, 611-712, 713-815, 816-921, 922-1023, and 1028-1146; these read QPPS…DPVF, EQQE…APQF, SEKR…APIF, VSTP…NPTF, TQPE…RPVF, QSSH…APQF, LRDS…PPVF, EQDE…PPVL, and ILFN…SPLL. N-linked (GlcNAc...) asparagine glycosylation is found at Asn-486, Asn-557, and Asn-701. N-linked (GlcNAc...) asparagine glycosylation is found at Asn-1036, Asn-1076, Asn-1182, and Asn-1212. Residues 1228 to 1286 enclose the EGF-like 1; calcium-binding domain; sequence DDNICLREPCENYMRCVSVLRFDSSAPFIASSSVLFRPIHPVGGLRCRCPPGFTGDYCE. Disulfide bonds link Cys-1232–Cys-1243, Cys-1237–Cys-1274, Cys-1276–Cys-1285, Cys-1292–Cys-1303, Cys-1297–Cys-1312, Cys-1314–Cys-1323, Cys-1332–Cys-1343, Cys-1337–Cys-1353, and Cys-1355–Cys-1365. One can recognise an EGF-like 2; calcium-binding domain in the interval 1288–1324; it reads EVDLCYSRPCGPHGRCRSREGGYTCLCRDGYTGEHCE. Residues 1328–1366 enclose the EGF-like 3; calcium-binding domain; that stretch reads RSGRCTPGVCKNGGTCVNLLVGGFKCDCPSGDFEKPYCQ. The Laminin G-like 1 domain occupies 1367 to 1571; that stretch reads VTTRSFPAHS…IANNGTVPGC (205 aa). 2 N-linked (GlcNAc...) asparagine glycosylation sites follow: Asn-1501 and Asn-1565. 4 disulfide bridges follow: Cys-1545–Cys-1571, Cys-1578–Cys-1589, Cys-1583–Cys-1598, and Cys-1600–Cys-1609. Positions 1574–1610 constitute an EGF-like 4; calcium-binding domain; it reads KKNVCDSNTCHNGGTCVNQWDAFSCECPLGFGGKSCA. Asn-1591 is modified ((3R)-3-hydroxyasparagine). Positions 1614–1791 constitute a Laminin G-like 2 domain; it reads ANPQHFLGSS…GESINVEQGC (178 aa). Asn-1741 carries N-linked (GlcNAc...) asparagine glycosylation. Intrachain disulfides connect Cys-1761–Cys-1791, Cys-1797–Cys-1808, Cys-1802–Cys-1817, Cys-1819–Cys-1828, Cys-1832–Cys-1843, Cys-1837–Cys-1855, Cys-1857–Cys-1866, Cys-1887–Cys-1899, Cys-1889–Cys-1906, Cys-1908–Cys-1921, Cys-1924–Cys-1936, Cys-1926–Cys-1943, Cys-1945–Cys-1954, and Cys-1957–Cys-1969. The 36-residue stretch at 1793–1828 folds into the EGF-like 5; calcium-binding domain; sequence LPDPCDSNPCPANSYCSNDWDSYSCSCDPGYYGDNC. Position 1810 is a (3R)-3-hydroxyasparagine (Asn-1810). Asn-1827 is a glycosylation site (N-linked (GlcNAc...) asparagine). The 39-residue stretch at 1829 to 1867 folds into the EGF-like 6; calcium-binding domain; the sequence is TNVCDLNPCEHQSVCTRKPSAPHGYTCECPPNYLGPYCE. Residues 1883–1922 form the EGF-like 7; calcium-binding domain; it reads TCGPCNCDVSKGFDPDCNKTSGECHCKENHYRPPGSPTCL. Asn-1900 is a glycosylation site (N-linked (GlcNAc...) asparagine). The Laminin EGF-like domain occupies 1924–1971; sequence CDCYPTGSLSRVCDPEDGQCPCKPGVIGRQCDRCDNPFAEVTTNGCEV. 3 N-linked (GlcNAc...) asparagine glycosylation sites follow: Asn-2024, Asn-2043, and Asn-2061. One can recognise a GAIN-B domain in the interval 2199 to 2369; the sequence is ETTVILPESV…AVLMDVSRRE (171 aa). The disordered stretch occupies residues 2213-2238; it reads PPVVRPAGPGEAQEPEELARRQRRHP. 2 cysteine pairs are disulfide-bonded: Cys-2319–Cys-2351 and Cys-2339–Cys-2353. The interval 2319–2369 is GPS; that stretch reads CVFWNHSILVSGTGGWSARGCEVVFRNESHVSCQCNHMTSFAVLMDVSRRE. N-linked (GlcNAc...) asparagine glycosylation is found at Asn-2323 and Asn-2345. Residues 2381–2401 traverse the membrane as a helical segment; that stretch reads YVALGVTLAALLLTFFFLTLL. Over 2402–2416 the chain is Cytoplasmic; that stretch reads RILRSNQHGIRRNLT. A helical membrane pass occupies residues 2417 to 2437; the sequence is AALGLAQLVFLLGINQADLPF. Position 2438 (Ala-2438) is a topological domain, extracellular. The helical transmembrane segment at 2439–2459 threads the bilayer; the sequence is CTVIAILLHFLYLCTFSWALL. The Cytoplasmic segment spans residues 2460-2480; sequence EALHLYRALTEVRDVNTGPMR. Residues 2481–2501 form a helical membrane-spanning segment; sequence FYYMLGWGVPAFITGLAVGLD. Residues 2502–2519 lie on the Extracellular side of the membrane; sequence PEGYGNPDFCWLSIYDTL. The helical transmembrane segment at 2520 to 2540 threads the bilayer; the sequence is IWSFAGPVAFAVSMSVFLYIL. At 2541-2560 the chain is on the cytoplasmic side; the sequence is AARASCAAQRQGFEKKGPVS. The chain crosses the membrane as a helical span at residues 2561–2581; it reads GLQPSFAVLLLLSATWLLALL. Residues 2582–2591 lie on the Extracellular side of the membrane; the sequence is SVNSDTLLFH. The helical transmembrane segment at 2592–2612 threads the bilayer; sequence YLFATCNCIQGPFIFLSYVVL. Residues 2613-2923 are Cytoplasmic-facing; that stretch reads SKEVRKALKL…SEFLFFNFLH (311 aa). Disordered regions lie at residues 2688–2838 and 2854–2888; these read SALN…HKGI and LRLP…RQSL. Composition is skewed to acidic residues over residues 2718–2730 and 2742–2753; these read TDSD…EDDQ and SEEEEEEEEEEA. Basic and acidic residues predominate over residues 2807-2819; it reads PEERLRENGDALS. A compositionally biased stretch (low complexity) spans 2863–2873; sequence GSSRGSSASEG.

The protein belongs to the G-protein coupled receptor 2 family. LN-TM7 subfamily. In terms of assembly, heterodimer of 2 chains generated by proteolytic processing; the large extracellular N-terminal fragment and the membrane-bound C-terminal fragment predominantly remain associated and non-covalently linked. In terms of processing, the iron and 2-oxoglutarate dependent 3-hydroxylation of aspartate and asparagine is (R) stereospecific within EGF domains. Post-translationally, autoproteolytically processed at the GPS region of the GAIN-B domain; this cleavage modulates receptor activity. Highest expression in brain and testis.

The protein resides in the cell membrane. Functionally, receptor that may have an important role in cell/cell signaling during nervous system formation. In Homo sapiens (Human), this protein is Cadherin EGF LAG seven-pass G-type receptor 2.